The sequence spans 707 residues: Polyribonucleotide nucleotidyltransferase (707 aa).

Residues Asp486 and Asp492 each contribute to the Mg(2+) site. The 60-residue stretch at Pro553–Ile612 folds into the KH domain. One can recognise an S1 motif domain in the interval Gly622 to Lys690.

It belongs to the polyribonucleotide nucleotidyltransferase family. Mg(2+) serves as cofactor.

The protein localises to the cytoplasm. The catalysed reaction is RNA(n+1) + phosphate = RNA(n) + a ribonucleoside 5'-diphosphate. Functionally, involved in mRNA degradation. Catalyzes the phosphorolysis of single-stranded polyribonucleotides processively in the 3'- to 5'-direction. This Sulfurihydrogenibium azorense (strain DSM 15241 / OCM 825 / Az-Fu1) protein is Polyribonucleotide nucleotidyltransferase.